Consider the following 157-residue polypeptide: Protein Smg homolog (157 aa).

It belongs to the Smg family.

In Shewanella loihica (strain ATCC BAA-1088 / PV-4), this protein is Protein Smg homolog.